Here is a 161-residue protein sequence, read N- to C-terminus: Nucleotide-binding protein Pput_4372 (161 aa).

Belongs to the YajQ family.

In terms of biological role, nucleotide-binding protein. The chain is Nucleotide-binding protein Pput_4372 from Pseudomonas putida (strain ATCC 700007 / DSM 6899 / JCM 31910 / BCRC 17059 / LMG 24140 / F1).